A 315-amino-acid chain; its full sequence is Cobalamin biosynthesis protein CobD (315 aa).

A run of 5 helical transmembrane segments spans residues 54 to 74 (GLLFVLTVGMTGAVSWFILFL), 78 to 98 (IAYWLYVAVFVYLGYTTLAMT), 152 to 172 (ADGVIAPLFYLFIGGPVLALM), 203 to 223 (IANFIPARLAWFFLVIASFIL), and 295 to 315 (LLYMASTIAFIMFASIYLLLF).

Belongs to the CobD/CbiB family.

Its subcellular location is the cell membrane. Its pathway is cofactor biosynthesis; adenosylcobalamin biosynthesis. Functionally, converts cobyric acid to cobinamide by the addition of aminopropanol on the F carboxylic group. This chain is Cobalamin biosynthesis protein CobD, found in Listeria monocytogenes serovar 1/2a (strain ATCC BAA-679 / EGD-e).